Reading from the N-terminus, the 37-residue chain is Large ribosomal subunit protein bL36 (37 aa).

It belongs to the bacterial ribosomal protein bL36 family.

The sequence is that of Large ribosomal subunit protein bL36 from Francisella tularensis subsp. mediasiatica (strain FSC147).